The primary structure comprises 706 residues: Choline transporter-like protein 2 (706 aa).

Residues 1 to 33 (MGGERQHYYGKHGTPQKYDPTFKGPIYHRGCTD) lie on the Cytoplasmic side of the membrane. Position 14 is a phosphothreonine (threonine 14). A helical membrane pass occupies residues 34 to 54 (VICCVFLLLAIVGYVAVGIIA). The Extracellular segment spans residues 55–232 (WTHGDPRKVI…RIFEDYTVSW (178 aa)). Residues asparagine 187 and asparagine 200 are each glycosylated (N-linked (GlcNAc...) asparagine). A helical transmembrane segment spans residues 233–253 (YWIIIGLVIAMVLSLLFIILL). Over 254–256 (RFL) the chain is Cytoplasmic. Residues 257–277 (AGIMVWVMIVMVILVLGYGIF) traverse the membrane as a helical segment. Residues 278 to 315 (HCYMEYSRLRGEAGSDISLVDLGFQTDLRVYLHLRQTW) lie on the Extracellular side of the membrane. Residues 316-336 (MAFMIILSILEVIIILLLIFL) traverse the membrane as a helical segment. Over 337-364 (RKRILIAIALIKEASRAVGYVMCSMLYP) the chain is Cytoplasmic. The chain crosses the membrane as a helical span at residues 365 to 385 (LVTFLLLCLCIAYWASTAIFL). The Extracellular segment spans residues 386–440 (STSNEAVYKIFSDTDCQAVGKTCNPENFSSSSEFHLCPGAHCQFAFYGGESTYHR). Residues 441–461 (ALLGLQIFNAFMFFWLANFVL) traverse the membrane as a helical segment. The Cytoplasmic portion of the chain corresponds to 462–504 (ALGQVTLAGAFASYYWALKKPDDLPAFPLFSAFGRALRYHTGS). The chain crosses the membrane as a helical span at residues 505–525 (LAFGSLLLAIVQIIRVMLEYL). Over 526–563 (DQRLKAAENKFAKFLMTCLKCCFWCLEKFIKFLNRNAY) the chain is Extracellular. Residues 564–584 (IMIAIYGTNFCTSARNAFFLL) form a helical membrane-spanning segment. The Cytoplasmic segment spans residues 585-599 (MRNIIRVAVLDKVTD). The helical transmembrane segment at 600 to 620 (FLFLLGKLLIVGSVGILAFFF) threads the bilayer. The Extracellular portion of the chain corresponds to 621–638 (FTHRIRIVQDTAPPLNYY). A helical transmembrane segment spans residues 639 to 659 (WVPILTVIVGSYLIAHGFFSV). At 660–706 (YGMCVDTLFLCFLEDLERNDGSMERPYFMSPTLKRLLNKTNRKPAES) the chain is on the cytoplasmic side.

It belongs to the CTL (choline transporter-like) family. In terms of assembly, interacts with COCH. In terms of processing, N-glycosylated.

Its subcellular location is the cell membrane. The protein localises to the mitochondrion outer membrane. The enzyme catalyses choline(out) + n H(+)(in) = choline(in) + n H(+)(out). It carries out the reaction ethanolamine(out) + n H(+)(in) = ethanolamine(in) + n H(+)(out). In terms of biological role, choline/H+ antiporter, mainly in mitochodria. Also acts as a low-affinity ethanolamine/H+ antiporter, regulating the supply of extracellular ethanolamine (Etn) for the CDP-Etn pathway, redistribute intracellular Etn and balance the CDP-Cho and CDP-Etn arms of the Kennedy pathway. In Sus scrofa (Pig), this protein is Choline transporter-like protein 2 (SLC44A2).